Reading from the N-terminus, the 384-residue chain is Glycerol 3-phosphate oxidase (384 aa).

A signal peptide spans 1-17 (MQTIDVLIVGGGVIGTS). An FAD-binding site is contributed by isoleucine 14. The N-palmitoyl cysteine moiety is linked to residue cysteine 18. Cysteine 18 is lipidated: S-diacylglycerol cysteine. FAD is bound by residues glutamate 33, 42–43 (TS), and 47–49 (SGV). The sn-glycerol 3-phosphate site is built by serine 47 and histidine 51. Catalysis depends on histidine 51, which acts as the Proton acceptor. Valine 177 contributes to the FAD binding site. Residues lysine 258 and arginine 320 each contribute to the sn-glycerol 3-phosphate site. An FAD-binding site is contributed by 346–347 (MK). Serine 348 lines the sn-glycerol 3-phosphate pocket. Threonine 352 contributes to the FAD binding site.

As to quaternary structure, monomer. The cofactor is FAD.

Its subcellular location is the cytoplasm. It localises to the cell membrane. The catalysed reaction is sn-glycerol 3-phosphate + O2 = dihydroxyacetone phosphate + H2O2. Its pathway is polyol metabolism; glycerol degradation via glycerol kinase pathway; glycerone phosphate from sn-glycerol 3-phosphate (aerobic route): step 1/1. In terms of biological role, catalyzes the oxidation of glycerol 3-phosphate to dihydroxyacetone phosphate (DHAP), with a reduction of O2 to H2O2. The formation of hydrogen peroxide by this enzyme is crucial for cytotoxic effects on host cells. Does not show any dehydrogenase activity with NAD(+). The chain is Glycerol 3-phosphate oxidase from Mycoplasma genitalium (strain ATCC 33530 / DSM 19775 / NCTC 10195 / G37) (Mycoplasmoides genitalium).